A 184-amino-acid polypeptide reads, in one-letter code: uncharacterized protein (184 aa).

It belongs to the PhzF family.

Its subcellular location is the cytoplasm. The protein localises to the nucleus. This is an uncharacterized protein from Schizosaccharomyces pombe (strain 972 / ATCC 24843) (Fission yeast).